The primary structure comprises 145 residues: Large ribosomal subunit protein mL59 (145 aa).

Residues 123–135 (LKKTSKFKNERQK) show a composition bias toward basic and acidic residues. Positions 123–145 (LKKTSKFKNERQKASKIAKPSPF) are disordered.

It belongs to the mitochondrion-specific ribosomal protein mL59 family. As to quaternary structure, component of the mitochondrial large ribosomal subunit (mt-LSU). Mature yeast 74S mitochondrial ribosomes consist of a small (37S) and a large (54S) subunit. The 37S small subunit contains a 15S ribosomal RNA (15S mt-rRNA) and at least 32 different proteins. The 54S large subunit contains a 21S rRNA (21S mt-rRNA) and at least 45 different proteins.

The protein localises to the mitochondrion. Component of the mitochondrial ribosome (mitoribosome), a dedicated translation machinery responsible for the synthesis of mitochondrial genome-encoded proteins, including at least some of the essential transmembrane subunits of the mitochondrial respiratory chain. The mitoribosomes are attached to the mitochondrial inner membrane and translation products are cotranslationally integrated into the membrane. This Schizosaccharomyces pombe (strain 972 / ATCC 24843) (Fission yeast) protein is Large ribosomal subunit protein mL59 (mrpl25).